We begin with the raw amino-acid sequence, 2150 residues long: Genome polyprotein (2150 aa).

G2 carries N-myristoyl glycine; by host lipidation. At 2–1463 (GAQVSRQNVG…ELNLANTIIT (1462 aa)) the chain is on the cytoplasmic side. An amphipathic alpha-helix region spans residues 565–581 (IAQNPVENYIDEVLNEV). The disordered stretch occupies residues 592–611 (PTTSNSAPALDAAETGHTSS). Active-site for protease 2A activity residues include H868 and D885. Positions 902 and 904 each coordinate Zn(2+). Residue C956 is the For protease 2A activity of the active site. C962 and H964 together coordinate Zn(2+). The membrane-binding stretch occupies residues 1088–1157 (SDSWLKKFTE…SLRVADMKTQ (70 aa)). Residues 1088 to 1221 (SDSWLKKFTE…PPGAGKSITT (134 aa)) form an oligomerization region. Residues 1109–1113 (GNKIS) are RNA-binding. Positions 1181–1343 (EAKRIKTLYI…FKDPQGKLNV (163 aa)) constitute an SF3 helicase domain. Zn(2+)-binding residues include C1350, C1361, and C1366. The C4-type; degenerate zinc finger occupies 1350–1366 (CDVDNRIGNARCCPFVC). The segment at 1393 to 1400 (EDRRRRQV) is RNA-binding. The interval 1404–1409 (MTAIFQ) is oligomerization. An intramembrane segment occupies 1464-1479 (IIANVIGMARIIYVIY). The Cytoplasmic segment spans residues 1480–2150 (KLFCTLQGPY…LLLHEWYEKF (671 aa)). O-(5'-phospho-RNA)-tyrosine is present on Y1489. The Peptidase C3 domain maps to 1508–1686 (GPEEEFGMSL…FSAMLLRSYF (179 aa)). Residues H1547, E1578, and C1654 each act as for protease 3C activity in the active site. Positions 1918–2031 (KCIMAFDYTN…SYIHELDMEA (114 aa)) constitute a RdRp catalytic domain. Positions 1924 and 2017 each coordinate Mg(2+).

This sequence belongs to the picornaviruses polyprotein family. Interacts with capsid protein VP1 and capsid protein VP3 to form heterotrimeric protomers. In terms of assembly, interacts with capsid protein VP0, and capsid protein VP3 to form heterotrimeric protomers. Five protomers subsequently associate to form pentamers which serve as building blocks for the capsid. Interacts with capsid protein VP2, capsid protein VP3 and capsid protein VP4 following cleavage of capsid protein VP0. As to quaternary structure, interacts with capsid protein VP1 and capsid protein VP3 in the mature capsid. Interacts with capsid protein VP0 and capsid protein VP1 to form heterotrimeric protomers. Five protomers subsequently associate to form pentamers which serve as building blocks for the capsid. Interacts with capsid protein VP4 in the mature capsid. Interacts with protein 2C; this interaction may be important for virion morphogenesis. In terms of assembly, interacts with capsid protein VP1 and capsid protein VP3. As to quaternary structure, homodimer. Homohexamer; forms a hexameric ring structure with 6-fold symmetry characteristic of AAA+ ATPases. Interacts (via N-terminus) with host RTN3 (via reticulon domain); this interaction is important for viral replication. Interacts with capsid protein VP3; this interaction may be important for virion morphogenesis. In terms of assembly, interacts with protein 3CD. As to quaternary structure, homodimer. Interacts with host GBF1. Interacts (via GOLD domain) with host ACBD3 (via GOLD domain); this interaction allows the formation of a viral protein 3A/ACBD3 heterotetramer with a 2:2 stoichiometry, which will stimulate the recruitment of host PI4KB in order to synthesize PI4P at the viral RNA replication sites. Interacts with RNA-directed RNA polymerase. In terms of assembly, interacts with protein 3AB and with RNA-directed RNA polymerase. As to quaternary structure, interacts with Viral protein genome-linked and with protein 3CD. Mg(2+) is required as a cofactor. In terms of processing, specific enzymatic cleavages in vivo by the viral proteases yield processing intermediates and the mature proteins. Post-translationally, myristoylation is required for the formation of pentamers during virus assembly. Further assembly of 12 pentamers and a molecule of genomic RNA generates the provirion. During virion maturation, immature virions are rendered infectious following cleavage of VP0 into VP4 and VP2. This maturation seems to be an autocatalytic event triggered by the presence of RNA in the capsid and it is followed by a conformational change infectious virion. In terms of processing, myristoylation is required during RNA encapsidation and formation of the mature virus particle. Post-translationally, VPg is uridylylated by the polymerase into VPg-pUpU. This acts as a nucleotide-peptide primer for the genomic RNA replication.

The protein localises to the virion. It is found in the host cytoplasm. It localises to the host cytoplasmic vesicle membrane. Its subcellular location is the host nucleus. The catalysed reaction is a ribonucleoside 5'-triphosphate + H2O = a ribonucleoside 5'-diphosphate + phosphate + H(+). It catalyses the reaction Selective cleavage of Tyr-|-Gly bond in the picornavirus polyprotein.. It carries out the reaction RNA(n) + a ribonucleoside 5'-triphosphate = RNA(n+1) + diphosphate. The enzyme catalyses Selective cleavage of Gln-|-Gly bond in the poliovirus polyprotein. In other picornavirus reactions Glu may be substituted for Gln, and Ser or Thr for Gly.. Its activity is regulated as follows. Replication or transcription is subject to high level of random mutations by the nucleotide analog ribavirin. Forms an icosahedral capsid of pseudo T=3 symmetry with capsid proteins VP2 and VP3. The capsid is 300 Angstroms in diameter, composed of 60 copies of each capsid protein and enclosing the viral positive strand RNA genome. Capsid protein VP1 mainly forms the vertices of the capsid. Capsid protein VP1 interacts with host cell receptor to provide virion attachment to target host cells. This attachment induces virion internalization. Tyrosine kinases are probably involved in the entry process. After binding to its receptor, the capsid undergoes conformational changes. Capsid protein VP1 N-terminus (that contains an amphipathic alpha-helix) and capsid protein VP4 are externalized. Together, they shape a pore in the host membrane through which viral genome is translocated to host cell cytoplasm. Its function is as follows. Forms an icosahedral capsid of pseudo T=3 symmetry with capsid proteins VP2 and VP3. The capsid is 300 Angstroms in diameter, composed of 60 copies of each capsid protein and enclosing the viral positive strand RNA genome. In terms of biological role, lies on the inner surface of the capsid shell. After binding to the host receptor, the capsid undergoes conformational changes. Capsid protein VP4 is released, Capsid protein VP1 N-terminus is externalized, and together, they shape a pore in the host membrane through which the viral genome is translocated into the host cell cytoplasm. Functionally, component of immature procapsids, which is cleaved into capsid proteins VP4 and VP2 after maturation. Allows the capsid to remain inactive before the maturation step. Cysteine protease that cleaves viral polyprotein and specific host proteins. It is responsible for the autocatalytic cleavage between the P1 and P2 regions, which is the first cleavage occurring in the polyprotein. Also cleaves the host translation initiation factor EIF4G1, in order to shut down the capped cellular mRNA translation. Inhibits the host nucleus-cytoplasm protein and RNA trafficking by cleaving host members of the nuclear pores. Counteracts stress granule formation probably by antagonizing its assembly or promoting its dissassembly. Its function is as follows. Plays an essential role in the virus replication cycle by acting as a viroporin. Creates a pore in the host endoplasmic reticulum and as a consequence releases Ca2+ in the cytoplasm of infected cell. In turn, high levels of cytoplasmic calcium may trigger membrane trafficking and transport of viral ER-associated proteins to viroplasms, sites of viral genome replication. In terms of biological role, induces and associates with structural rearrangements of intracellular membranes. Displays RNA-binding, nucleotide binding and NTPase activities. May play a role in virion morphogenesis and viral RNA encapsidation by interacting with the capsid protein VP3. Functionally, localizes the viral replication complex to the surface of membranous vesicles. Together with protein 3CD binds the Cis-Active RNA Element (CRE) which is involved in RNA synthesis initiation. Acts as a cofactor to stimulate the activity of 3D polymerase, maybe through a nucleid acid chaperone activity. Localizes the viral replication complex to the surface of membranous vesicles. It inhibits host cell endoplasmic reticulum-to-Golgi apparatus transport and causes the disassembly of the Golgi complex, possibly through GBF1 interaction. This would result in depletion of MHC, trail receptors and IFN receptors at the host cell surface. Plays an essential role in viral RNA replication by recruiting ACBD3 and PI4KB at the viral replication sites, thereby allowing the formation of the rearranged membranous structures where viral replication takes place. Its function is as follows. Acts as a primer for viral RNA replication and remains covalently bound to viral genomic RNA. VPg is uridylylated prior to priming replication into VPg-pUpU. The oriI viral genomic sequence may act as a template for this. The VPg-pUpU is then used as primer on the genomic RNA poly(A) by the RNA-dependent RNA polymerase to replicate the viral genome. During genome replication, the VPg-RNA linkage is removed by the host TDP2, thereby accelerating replication. During the late stage of the replication cycle, host TDP2 is excluded from sites of viral RNA synthesis and encapsidation, allowing for the generation of progeny virions. In terms of biological role, involved in the viral replication complex and viral polypeptide maturation. It exhibits protease activity with a specificity and catalytic efficiency that is different from protease 3C. Protein 3CD lacks polymerase activity. Protein 3CD binds to the 5'UTR of the viral genome. Functionally, replicates the viral genomic RNA on the surface of intracellular membranes. May form linear arrays of subunits that propagate along a strong head-to-tail interaction called interface-I. Covalently attaches UMP to a tyrosine of VPg, which is used to prime RNA synthesis. The positive stranded RNA genome is first replicated at virus induced membranous vesicles, creating a dsRNA genomic replication form. This dsRNA is then used as template to synthesize positive stranded RNA genomes. ss(+)RNA genomes are either translated, replicated or encapsidated. Major viral protease that mediates proteolytic processing of the polyprotein. Cleaves host EIF5B, contributing to host translation shutoff. Also cleaves host PABPC1, contributing to host translation shutoff. Cleaves host NLRP1, triggers host N-glycine-mediated degradation of the autoinhibitory NLRP1 N-terminal fragment. This chain is Genome polyprotein, found in Homo sapiens (Human).